Reading from the N-terminus, the 306-residue chain is Bifunctional protein FolD 2 (306 aa).

NADP(+) contacts are provided by residues 169–171 (GHS) and isoleucine 235.

The protein belongs to the tetrahydrofolate dehydrogenase/cyclohydrolase family. As to quaternary structure, homodimer.

It carries out the reaction (6R)-5,10-methylene-5,6,7,8-tetrahydrofolate + NADP(+) = (6R)-5,10-methenyltetrahydrofolate + NADPH. The enzyme catalyses (6R)-5,10-methenyltetrahydrofolate + H2O = (6R)-10-formyltetrahydrofolate + H(+). It functions in the pathway one-carbon metabolism; tetrahydrofolate interconversion. In terms of biological role, catalyzes the oxidation of 5,10-methylenetetrahydrofolate to 5,10-methenyltetrahydrofolate and then the hydrolysis of 5,10-methenyltetrahydrofolate to 10-formyltetrahydrofolate. In Mesorhizobium japonicum (strain LMG 29417 / CECT 9101 / MAFF 303099) (Mesorhizobium loti (strain MAFF 303099)), this protein is Bifunctional protein FolD 2.